The sequence spans 597 residues: Arginine--tRNA ligase (597 aa).

The short motif at 125 to 135 (PNTNKPLHLGH) is the 'HIGH' region element.

Belongs to the class-I aminoacyl-tRNA synthetase family. In terms of assembly, monomer.

The protein resides in the cytoplasm. It carries out the reaction tRNA(Arg) + L-arginine + ATP = L-arginyl-tRNA(Arg) + AMP + diphosphate. The protein is Arginine--tRNA ligase of Bacteroides fragilis (strain YCH46).